A 932-amino-acid polypeptide reads, in one-letter code: Beta-mannosidase A (932 aa).

An N-terminal signal peptide occupies residues 1–19 (MRVPAQATIAVLASAVSSP). N-linked (GlcNAc...) asparagine glycosylation is found at Asn-41, Asn-81, Asn-94, Asn-249, Asn-261, Asn-284, Asn-289, Asn-318, and Asn-348. Residue Glu-480 is the Proton donor of the active site. N-linked (GlcNAc...) asparagine glycosylation is found at Asn-538, Asn-551, Asn-609, Asn-624, Asn-632, Asn-659, Asn-739, and Asn-791.

Belongs to the glycosyl hydrolase 2 family. Beta-mannosidase A subfamily. As to quaternary structure, homodimer.

It localises to the secreted. It carries out the reaction Hydrolysis of terminal, non-reducing beta-D-mannose residues in beta-D-mannosides.. It participates in glycan metabolism; N-glycan degradation. Functionally, exoglycosidase that cleaves the single beta-linked mannose residue from the non-reducing end of beta-mannosidic oligosaccharides of various complexity and length. Involved in the degradation of polymeric mannan and galactomannan. The polypeptide is Beta-mannosidase A (mndA) (Aspergillus terreus (strain NIH 2624 / FGSC A1156)).